A 154-amino-acid polypeptide reads, in one-letter code: Crossover junction endodeoxyribonuclease RuvC (154 aa).

Catalysis depends on residues aspartate 7, glutamate 66, and aspartate 139. Residues aspartate 7, glutamate 66, and aspartate 139 each contribute to the Mg(2+) site.

This sequence belongs to the RuvC family. As to quaternary structure, homodimer which binds Holliday junction (HJ) DNA. The HJ becomes 2-fold symmetrical on binding to RuvC with unstacked arms; it has a different conformation from HJ DNA in complex with RuvA. In the full resolvosome a probable DNA-RuvA(4)-RuvB(12)-RuvC(2) complex forms which resolves the HJ. It depends on Mg(2+) as a cofactor.

The protein resides in the cytoplasm. It carries out the reaction Endonucleolytic cleavage at a junction such as a reciprocal single-stranded crossover between two homologous DNA duplexes (Holliday junction).. In terms of biological role, the RuvA-RuvB-RuvC complex processes Holliday junction (HJ) DNA during genetic recombination and DNA repair. Endonuclease that resolves HJ intermediates. Cleaves cruciform DNA by making single-stranded nicks across the HJ at symmetrical positions within the homologous arms, yielding a 5'-phosphate and a 3'-hydroxyl group; requires a central core of homology in the junction. The consensus cleavage sequence is 5'-(A/T)TT(C/G)-3'. Cleavage occurs on the 3'-side of the TT dinucleotide at the point of strand exchange. HJ branch migration catalyzed by RuvA-RuvB allows RuvC to scan DNA until it finds its consensus sequence, where it cleaves and resolves the cruciform DNA. The chain is Crossover junction endodeoxyribonuclease RuvC from Aliarcobacter butzleri (strain RM4018) (Arcobacter butzleri).